A 300-amino-acid chain; its full sequence is Transcription initiation factor IIB (300 aa).

The segment at 2-34 adopts a TFIIB-type zinc-finger fold; the sequence is TKQKVCPVCGSTEFIYDPERGEIVCARCGYVIE. Residues Cys7, Cys10, Cys26, and Cys29 each contribute to the Zn(2+) site. A run of 2 repeats spans residues 114–197 and 210–291.

The protein belongs to the TFIIB family.

Its function is as follows. Stabilizes TBP binding to an archaeal box-A promoter. Also responsible for recruiting RNA polymerase II to the pre-initiation complex (DNA-TBP-TFIIB). This is Transcription initiation factor IIB from Pyrococcus horikoshii (strain ATCC 700860 / DSM 12428 / JCM 9974 / NBRC 100139 / OT-3).